Consider the following 680-residue polypeptide: Glutamine-dependent NAD(+) synthetase (680 aa).

The 265-residue stretch at 12 to 276 (VRVAACTHHA…EHRSVADVDT (265 aa)) folds into the CN hydrolase domain. Glu-52 serves as the catalytic Proton acceptor; for glutaminase activity. Lys-121 acts as the For glutaminase activity in catalysis. L-glutamine is bound at residue Tyr-127. The Nucleophile; for glutaminase activity role is filled by Cys-176. 2 residues coordinate L-glutamine: Ser-203 and Arg-209. 366–373 (GVSGGLDS) contacts ATP. Asn-456 lines the deamido-NAD(+) pocket. Thr-480 contributes to the ATP binding site. Deamido-NAD(+)-binding positions include Glu-485, 490–493 (WSTY), and Lys-636.

The protein in the C-terminal section; belongs to the NAD synthetase family.

The catalysed reaction is deamido-NAD(+) + L-glutamine + ATP + H2O = L-glutamate + AMP + diphosphate + NAD(+) + H(+). It participates in cofactor biosynthesis; NAD(+) biosynthesis; NAD(+) from deamido-NAD(+) (L-Gln route): step 1/1. Catalyzes the ATP-dependent amidation of deamido-NAD to form NAD. Uses L-glutamine as a nitrogen source. The protein is Glutamine-dependent NAD(+) synthetase of Mycobacterium leprae (strain TN).